A 739-amino-acid polypeptide reads, in one-letter code: Phosphoribosylformylglycinamidine synthase subunit PurL (739 aa).

The active site involves His-54. Residues Tyr-57 and Lys-96 each coordinate ATP. Position 98 (Glu-98) interacts with Mg(2+). Residues Ser-99–His-102 and Arg-121 contribute to the substrate site. His-100 (proton acceptor) is an active-site residue. Position 122 (Asp-122) interacts with Mg(2+). Position 245 (Gln-245) interacts with substrate. Asp-273 contributes to the Mg(2+) binding site. Glu-317–Gln-319 is a substrate binding site. Positions 500 and 537 each coordinate ATP. Asn-538 lines the Mg(2+) pocket. Substrate is bound at residue Ser-540.

The protein belongs to the FGAMS family. In terms of assembly, monomer. Part of the FGAM synthase complex composed of 1 PurL, 1 PurQ and 2 PurS subunits.

The protein resides in the cytoplasm. It carries out the reaction N(2)-formyl-N(1)-(5-phospho-beta-D-ribosyl)glycinamide + L-glutamine + ATP + H2O = 2-formamido-N(1)-(5-O-phospho-beta-D-ribosyl)acetamidine + L-glutamate + ADP + phosphate + H(+). It functions in the pathway purine metabolism; IMP biosynthesis via de novo pathway; 5-amino-1-(5-phospho-D-ribosyl)imidazole from N(2)-formyl-N(1)-(5-phospho-D-ribosyl)glycinamide: step 1/2. Part of the phosphoribosylformylglycinamidine synthase complex involved in the purines biosynthetic pathway. Catalyzes the ATP-dependent conversion of formylglycinamide ribonucleotide (FGAR) and glutamine to yield formylglycinamidine ribonucleotide (FGAM) and glutamate. The FGAM synthase complex is composed of three subunits. PurQ produces an ammonia molecule by converting glutamine to glutamate. PurL transfers the ammonia molecule to FGAR to form FGAM in an ATP-dependent manner. PurS interacts with PurQ and PurL and is thought to assist in the transfer of the ammonia molecule from PurQ to PurL. This Bacillus cereus (strain B4264) protein is Phosphoribosylformylglycinamidine synthase subunit PurL.